Here is a 63-residue protein sequence, read N- to C-terminus: Cecropin-B (63 aa).

The first 22 residues, 1–22, serve as a signal peptide directing secretion; the sequence is MNFAKILSFVFALVLALSMTSA. Positions 23 to 26 are cleaved as a propeptide — removed by a dipeptidylpeptidase; it reads APEP. 5-hydroxylysine; partial is present on K47. Residue I61 is modified to Isoleucine amide.

Belongs to the cecropin family. Post-translationally, lepidopteran-B differs from lepidopteran-A by its hydroxylated residue. As to expression, highest expression in fat body and hemocytes. Is also expressed in Malpighian tubules and to a much lesser extent in midgut. Not present in silk gland.

The protein localises to the secreted. Cecropins have lytic and antibacterial activity against several Gram-positive and Gram-negative bacteria. This chain is Cecropin-B (CECB1), found in Bombyx mori (Silk moth).